A 2352-amino-acid chain; its full sequence is MSVDNKQVPGPVAIVGLACRFPGDATSPSKFWDLLKSGKDAYSETTDRYNAQAFYHPNSKRQNVLPVTGGHFLKQDPHVFDAAFFNITAAEAISLDPKQRIALEVAYEAFENAGKPLKQVAGTTTACFVGSSMSDYRDAVVRDFAHNPKYHVLGTCEEMIANRISHFFDIHGPSATVHTACSSSLVAIHLACQSLLSGDAEMALAGGVGMILTPDGTMQLNNLGFLNPEGHSRSFDKDAGGYGRGEGCGILVLKKLDKAIQDGDNIRAVIRASGVNSDGWTQGVTMPSSEAQAALIKHVYETRGLDYGATQYVEAHGTGTKAGDPVETGAIHRTIGQGASKNRKLWVGSVKPNIGHLEAAAGVASVIKGVLAMENSLIPPNIHFASPNPEIPLDEWNMAVPTKLTPWPAARTKRMSVSGFGMGGTNGHVVLEAFNSTPQSILYGDAQYQPAHNGKRLFTFSSHDQAGLDRVSKSLVDHLDSLGPAGARPEYLADLGYSLSVGKSGLSWKTAHLAESLTELREKLSSPQSEHAVREPRSQPKIGFVFTGQGAQWARMGVEMLHRPVFKESVQRSTDYLQQLGCDWTPIVELSRAQKESRLTLPEISQPICSVLQIALVDELRSWGVAPVSVVGHSSGEIAAAYCIEALSHKDAIAVAYFRGKVSAGLNHLNGGMMAVGCSRAEAETLIDESDLQGGHVTVACVNSPSNVTLSGDVAPLDQLKGILEKRGIFARRLRVEVAYHSTHMNSVFADYTASIADIEPQSCPSHQPIMVSSVTNNQVDPALLGSYYWGRNLISPVLFSDTIKEMVSPADGNGQKAVDLLVEIGPHGALGGPIEQILSHFDIENVGYQSMLTRGQNAVETSLELATSLFLQGVAIDIQKVNGDSGCRLLTNLPPYPWNHSKKFRAESRLQRELIAQSTPTRSIIGAPVPKMNESQRVWRGFIRLDDEPWIRGHTVGTTVLFPGAGMVSIVLEAAQQMVDPGKVARAFRLRDVSFSAAMALPEDQATEVIIQMKPQLVATSGSTPATWWEFTVSSCAGTDQLRDNCRGLITIDYEGNTSQQMAHEDSQVVSGRISDYHQILEECPATYAKDRFYKHMMKAAWRYGETFQGVENCHPGDGKTVFDVKLIDIGETFSKGQLDRPFLIHGATLDAVFQGWLGSTYKNGTFEFDKPFVPTKIGEMEISFNVPSEAGYMMPGLCRSHRSGFNELSADTIMFDKDLSRVILSVIDFRTSELEMDGAATEETTVEVDPADITSKVLWDYSLSLMEPCDLKQVMGSIVAQNSLTDFVRMLLHDNPAANIVEFISRSDGLPNTYASKLPPGTILPTQIRYAVVDETEDVGDENAASSMLTIDALVDSVSASGATADIVVIPQGFQFQDNYAKILEPLAKVSKPNTTIVVAVDTPDTTVPLKAKGFQLLHSIQGTPSLEVFAGLTGEQEKPTNGIHKEEVVLLLPSMLSTVTKEFAEEVQLDLEGQGFSVSTESLAESIDDSTFDGKTCVSLLEVERPLLDSLSESDFQLIRKVVLTSQRILWVTHGESPSLALVDGFSRCIMSEIEGVKFQVLHLSEPTGLQHGPRLAAKVIASKASDNEFRDKDGLLQVARIFKGLTENENIRHHLHDDVRVTRLSNQEHPLRLTIGKPGLLDTLYFVDDERVLAPLADHEVEIQVKATGLNFRDVMASMALVPVKGLGQEASGIVLRTGRDATHLKPGDRVSTLDMGTHATVMRADHRVTVKIPDAMSFEEAAAVPVVHTTAYYALVRLAKLQRGQSVLIHAAAGGVGQAALQLANHLGLVVYATVGSDDKRKLLTDTYQVSEDHIFNSRDASFAKGIMRVTGGRGVDCVLNSLSGELLRVSWSCLATFGTFVEIGLRDITNNMLLDMRPFSKSTTFSFINMYTLFEEDPSALGDILEEVFKLLGGGILQTPSPMTVYPINQVEDAFRIMQQGKHRGKIVLSFPDDAQAPVLHVAKNSMKLDSQATYLFVGGLGGLGRSLAKEFVSCGAKNIAFISRSGDSTSEAKATIKEITSRGANVKAYAADISNETAFLNAMKECSREFPPIKGVVQMAMVLRDVVFEKMTYEEWKLPLKPKVQGSWNLHKYFDHERPLDFMVICSSSSGIYGYPSQAQYAAGNTYQDALAHYRRAQGLRAVSVNLGIMRDVGVLAEQGTSGNIKLWEEVLGIREPAFHALMKSLIKGQTDNNSEFPAQICTGLGTADIMATHGLAKPTYFQDPRFGPLAVTSLSSDASGDKQSTAMSISSQLSEASSKAKATEIITNALIGKVADILQMPQSEVDPGQPLYRYGVDSLVALEVRNWITREMKVNVALLEILAAVPMESFAGKLASTSKLVTVS.

The Ketosynthase family 3 (KS3) domain occupies 9–433; that stretch reads PGPVAIVGLA…GTNGHVVLEA (425 aa). Residues Cys181, His316, and His356 each act as for beta-ketoacyl synthase activity in the active site. Residues 544–875 are malonyl-CoA:ACP transacylase (MAT) domain; that stretch reads FVFTGQGAQW…LATSLFLQGV (332 aa). Residue Ser634 is the For malonyltransferase activity of the active site. The tract at residues 923 to 1058 is N-terminal hotdog fold; that stretch reads RSIIGAPVPK…GLITIDYEGN (136 aa). The 320-residue stretch at 923-1242 folds into the PKS/mFAS DH domain; the sequence is RSIIGAPVPK…TSELEMDGAA (320 aa). The segment at 925–1237 is dehydratase (DH) domain; sequence IIGAPVPKMN…VIDFRTSELE (313 aa). Residue His955 is the Proton acceptor; for dehydratase activity of the active site. The segment at 1086-1242 is C-terminal hotdog fold; it reads PATYAKDRFY…TSELEMDGAA (157 aa). Asp1152 (proton donor; for dehydratase activity) is an active-site residue. Residues 1643 to 1955 are enoylreductase (ER) domain; that stretch reads GLLDTLYFVD…QGKHRGKIVL (313 aa). The segment at 1979–2159 is catalytic ketoreductase (KRc) domain; the sequence is ATYLFVGGLG…VSVNLGIMRD (181 aa). The Carrier domain occupies 2269–2346; sequence KATEIITNAL…SFAGKLASTS (78 aa). An O-(pantetheine 4'-phosphoryl)serine modification is found at Ser2306.

It functions in the pathway mycotoxin biosynthesis. Functionally, highly reducing polyketide synthase; part of the gene cluster that mediates the biosynthesis of zearalenone (ZEA), a nonsteroid estrogen that is a contaminant of cereal grains and causes estrogenic disorders in humans and animals. The ZEA backbone is synthesized from a single acetyl-CoA molecule and eight malonyl-CoA molecules. The reducing polyketide synthase ZEA2 is proposed to synthesize a reduced hexaketide intermediate by using different combinations of its reductive domains during each round of condensation. The hexaketide thioester is then transacylated to the non-reducing polyketide synthase ZEA1 and is further condensed with three malonyl-CoAs without reductive tailoring to yield a mixed reduced/unreduced nonaketide. ZEA1 must be able to interact with ZEA2 to facilitate starter-unit acyltransfer and initiate polyketide biosynthesis. ZEA1 also mediates the required C2-C7 cyclization to form the resorcylate core and catalyzes the formation of the macrolactone. ZEB1 is then responsible for the chemical conversion of beta-zearalenonol (beta-ZOL) to ZEA in the biosynthetic pathway. This chain is Highly reducing polyketide synthase ZEA2, found in Gibberella zeae (strain ATCC MYA-4620 / CBS 123657 / FGSC 9075 / NRRL 31084 / PH-1) (Wheat head blight fungus).